The sequence spans 101 residues: MSENCGPTDAHADHDDSHGGMGCAEVIAEVWTLLDGECTPETRERLRRHLEACPGCLRHYGLEERIKALIGTKCRGDRAPEGLRERLRLEIRRTTIIRGGP.

The tract at residues 9–15 (DAHADHD) is inhibits SigH sigma factor activity. Cysteine 23 is a binding site for iron-sulfur cluster. 2 inhibits SigH sigma factor activity regions span residues 28–34 (AEVWTLL) and 38–44 (CTPETRE). Iron-sulfur cluster is bound by residues histidine 49, cysteine 53, and cysteine 56. Threonine 94 is subject to Phosphothreonine.

The protein belongs to the zinc-associated anti-sigma factor (ZAS) superfamily. Interacts with cognate sigma factor SigH under reducing conditions. Binding inhibits the interaction of SigH with the RNA polymerase catalytic core. The cofactor is iron-sulfur cluster. In terms of processing, phosphorylated, probably by PknB. Phosphorylation decreases interaction with SigH, leading to increased SigH-mediated transcription.

An redox-regulated anti-sigma factor for extracytoplasmic function (ECF) sigma factor SigH. ECF sigma factors are held in an inactive form by a cognate anti-sigma factor. RshA and some peptides derived from it inhibit the sigma factor activity of SigH. Probably releases SigH during oxidative stress. This chain is Anti-sigma factor RshA (rshA), found in Mycobacterium tuberculosis (strain CDC 1551 / Oshkosh).